A 156-amino-acid polypeptide reads, in one-letter code: Ribosome maturation factor RimP (156 aa).

The protein belongs to the RimP family.

It is found in the cytoplasm. In terms of biological role, required for maturation of 30S ribosomal subunits. This Synechococcus sp. (strain JA-2-3B'a(2-13)) (Cyanobacteria bacterium Yellowstone B-Prime) protein is Ribosome maturation factor RimP.